We begin with the raw amino-acid sequence, 323 residues long: MAAARPEAQSRSSPTPESRSQEPLDLVLVPDDCRPGTPPSDLIEIQVVKVTDTTLVPEPPEPGSFHCALCPAAFRLVSELLFHEHGHLAGAEGGGQGGDPSRCHVCGHSCPGPASLRAHYSLHTGERPYRCALCPRAFKALAPLLRHQHRHGVEPGTSRRPPDTAAVAEQRPGVAPERAEVVMAAAAAGAAVGKPFACRFCAKPFRRSSDMRDHERVHTGERPYHCGICGKGFTQSSVLSGHARIHTGERPFRCTLCDRTFNNSSNFRKHQRTHFHGPGPGLGDSGGQLGSSAAEGSGSGCGVGDPAEEGRGETAKVKVEADQ.

A disordered region spans residues 1-26 (MAAARPEAQSRSSPTPESRSQEPLDL). The span at 9 to 18 (QSRSSPTPES) shows a compositional bias: polar residues. S13 carries the phosphoserine modification. 6 C2H2-type zinc fingers span residues 65–87 (FHCA…EHGH), 101–123 (SRCH…YSLH), 129–151 (YRCA…QHRH), 196–218 (FACR…ERVH), 224–246 (YHCG…ARIH), and 252–274 (FRCT…QRTH). Residues 269–323 (KHQRTHFHGPGPGLGDSGGQLGSSAAEGSGSGCGVGDPAEEGRGETAKVKVEADQ) form a disordered region. Gly residues predominate over residues 278-289 (PGPGLGDSGGQL). Over residues 308 to 323 (EEGRGETAKVKVEADQ) the composition is skewed to basic and acidic residues. Residue K318 forms a Glycyl lysine isopeptide (Lys-Gly) (interchain with G-Cter in SUMO2) linkage.

Belongs to the krueppel C2H2-type zinc-finger protein family.

It is found in the nucleus. Functionally, may be involved in transcriptional regulation. The chain is Zinc finger protein 784 (ZNF784) from Homo sapiens (Human).